Consider the following 204-residue polypeptide: Fruiting body protein SC7 (204 aa).

Residues 1-16 form the signal peptide; sequence MKLTVILLTAVLAASA. An SCP domain is found at 62-185; the sequence is LKAHNNERAQ…KTLWYYVCNY (124 aa). N-linked (GlcNAc...) asparagine glycans are attached at residues Asn-80, Asn-118, and Asn-134.

The protein belongs to the CRISP family.

Its subcellular location is the secreted. This is Fruiting body protein SC7 (SC7) from Schizophyllum commune (Split gill fungus).